Here is a 179-residue protein sequence, read N- to C-terminus: UPF0227 protein VC0395_A1482/VC395_2007 (179 aa).

Belongs to the UPF0227 family.

The polypeptide is UPF0227 protein VC0395_A1482/VC395_2007 (Vibrio cholerae serotype O1 (strain ATCC 39541 / Classical Ogawa 395 / O395)).